The sequence spans 439 residues: Xaa-Pro dipeptidase (439 aa).

Mn(2+)-binding residues include D244, D255, H335, E380, and E419.

It belongs to the peptidase M24B family. Bacterial-type prolidase subfamily. Requires Mn(2+) as cofactor.

It carries out the reaction Xaa-L-Pro dipeptide + H2O = an L-alpha-amino acid + L-proline. Splits dipeptides with a prolyl residue in the C-terminal position. This chain is Xaa-Pro dipeptidase, found in Shewanella amazonensis (strain ATCC BAA-1098 / SB2B).